The following is a 744-amino-acid chain: Catalase-peroxidase (744 aa).

The first 22 residues, 1 to 22 (MSPRARRCTDRCARMSERSMNA), serve as a signal peptide directing secretion. The tryptophyl-tyrosyl-methioninium (Trp-Tyr) (with M-260) cross-link spans 114-234 (WHSAGTYRLA…LGATEMGLIY (121 aa)). The active-site Proton acceptor is histidine 115. Positions 234-260 (YVNPEGPDRNGDPISAAKFIRETFARM) form a cross-link, tryptophyl-tyrosyl-methioninium (Tyr-Met) (with W-114). A heme b-binding site is contributed by histidine 275.

Belongs to the peroxidase family. Peroxidase/catalase subfamily. In terms of assembly, homodimer or homotetramer. Heme b is required as a cofactor. Formation of the three residue Trp-Tyr-Met cross-link is important for the catalase, but not the peroxidase activity of the enzyme.

It carries out the reaction H2O2 + AH2 = A + 2 H2O. It catalyses the reaction 2 H2O2 = O2 + 2 H2O. Bifunctional enzyme with both catalase and broad-spectrum peroxidase activity. This Azorhizobium caulinodans (strain ATCC 43989 / DSM 5975 / JCM 20966 / LMG 6465 / NBRC 14845 / NCIMB 13405 / ORS 571) protein is Catalase-peroxidase.